Reading from the N-terminus, the 228-residue chain is PKHD-type hydroxylase YbiX (228 aa).

The Fe2OG dioxygenase domain maps to 78–177 (TLSTPLFNRY…RVASFIWIQS (100 aa)). Positions 96, 98, and 158 each coordinate Fe cation. Arginine 168 provides a ligand contact to 2-oxoglutarate.

Fe(2+) serves as cofactor. The cofactor is L-ascorbate.

The protein is PKHD-type hydroxylase YbiX of Escherichia coli O157:H7.